The chain runs to 142 residues: Large ribosomal subunit protein uL13 (142 aa).

The protein belongs to the universal ribosomal protein uL13 family. As to quaternary structure, part of the 50S ribosomal subunit.

Its function is as follows. This protein is one of the early assembly proteins of the 50S ribosomal subunit, although it is not seen to bind rRNA by itself. It is important during the early stages of 50S assembly. In Francisella tularensis subsp. mediasiatica (strain FSC147), this protein is Large ribosomal subunit protein uL13.